Reading from the N-terminus, the 75-residue chain is Large ribosomal subunit protein bL31 (75 aa).

Zn(2+) is bound by residues Cys16, Cys18, Cys37, and Cys40.

It belongs to the bacterial ribosomal protein bL31 family. Type A subfamily. Part of the 50S ribosomal subunit. Zn(2+) is required as a cofactor.

Its function is as follows. Binds the 23S rRNA. This chain is Large ribosomal subunit protein bL31, found in Nitrosospira multiformis (strain ATCC 25196 / NCIMB 11849 / C 71).